Reading from the N-terminus, the 61-residue chain is Weak toxin CM-2 (61 aa).

Disulfide bonds link Cys-3–Cys-21, Cys-14–Cys-37, Cys-41–Cys-53, and Cys-54–Cys-59.

The protein belongs to the three-finger toxin family. Short-chain subfamily. Orphan group VI sub-subfamily. Expressed by the venom gland.

The protein localises to the secreted. The polypeptide is Weak toxin CM-2 (Naja haje haje (Egyptian cobra)).